A 452-amino-acid chain; its full sequence is tRNA modification GTPase MnmE (452 aa).

Positions 28, 85, and 124 each coordinate (6S)-5-formyl-5,6,7,8-tetrahydrofolate. Residues 220–378 (GMNVVLVGRP…LRTELLRAAG (159 aa)) form the TrmE-type G domain. Asparagine 230 provides a ligand contact to K(+). Residues 230-235 (NVGKSS), 249-255 (TDVAGTT), 274-277 (DTAG), and 359-361 (SAR) contribute to the GTP site. A Mg(2+)-binding site is contributed by serine 234. Residues threonine 249, valine 251, and threonine 254 each coordinate K(+). Mg(2+) is bound at residue threonine 255. Position 452 (lysine 452) interacts with (6S)-5-formyl-5,6,7,8-tetrahydrofolate.

Belongs to the TRAFAC class TrmE-Era-EngA-EngB-Septin-like GTPase superfamily. TrmE GTPase family. Homodimer. Heterotetramer of two MnmE and two MnmG subunits. K(+) is required as a cofactor.

It localises to the cytoplasm. Its function is as follows. Exhibits a very high intrinsic GTPase hydrolysis rate. Involved in the addition of a carboxymethylaminomethyl (cmnm) group at the wobble position (U34) of certain tRNAs, forming tRNA-cmnm(5)s(2)U34. In Azoarcus sp. (strain BH72), this protein is tRNA modification GTPase MnmE.